Reading from the N-terminus, the 1008-residue chain is Probable transport protein MmpL10 (1008 aa).

The next 12 membrane-spanning stretches (helical) occupy residues 23 to 43, 202 to 222, 225 to 245, 257 to 277, 301 to 321, 340 to 360, 389 to 409, 835 to 855, 862 to 882, 895 to 915, 940 to 960, and 961 to 981; these read WPWV…MTVP, IELV…RNPI, LLPL…VSGV, MIVL…VFLI, ALIS…ITFL, IGIA…LVLA, VAYL…ASLV, DLQL…MALL, IYLV…CVLV, VPGL…MLLA, VITA…LSSI, and ATVV…TFIV.

It belongs to the resistance-nodulation-cell division (RND) (TC 2.A.6) family. MmpL subfamily.

It localises to the cell membrane. This Mycobacterium leprae (strain TN) protein is Probable transport protein MmpL10 (mmpL10).